Reading from the N-terminus, the 197-residue chain is Putative carbonic anhydrase YvdA (197 aa).

Positions 41, 43, 99, and 102 each coordinate Zn(2+).

Belongs to the beta-class carbonic anhydrase family. It depends on Zn(2+) as a cofactor.

The enzyme catalyses hydrogencarbonate + H(+) = CO2 + H2O. Functionally, reversible hydration of carbon dioxide. The protein is Putative carbonic anhydrase YvdA (yvdA) of Bacillus subtilis (strain 168).